A 251-amino-acid chain; its full sequence is Hydroxyacylglutathione hydrolase (251 aa).

Residues His-54, His-56, Asp-58, His-59, His-113, Asp-140, and His-178 each contribute to the Zn(2+) site.

Belongs to the metallo-beta-lactamase superfamily. Glyoxalase II family. In terms of assembly, monomer. The cofactor is Zn(2+).

It carries out the reaction an S-(2-hydroxyacyl)glutathione + H2O = a 2-hydroxy carboxylate + glutathione + H(+). It functions in the pathway secondary metabolite metabolism; methylglyoxal degradation; (R)-lactate from methylglyoxal: step 2/2. Its function is as follows. Thiolesterase that catalyzes the hydrolysis of S-D-lactoyl-glutathione to form glutathione and D-lactic acid. In Synechococcus sp. (strain CC9902), this protein is Hydroxyacylglutathione hydrolase.